We begin with the raw amino-acid sequence, 482 residues long: Adenylyltransferase and sulfurtransferase uba4 (482 aa).

Residues Gly-93, Asp-114, 121-125, Lys-138, and 182-183 contribute to the ATP site; these read SNLHR and DN. Zn(2+)-binding residues include Cys-231 and Cys-234. Cys-248 functions as the Glycyl thioester intermediate; for adenylyltransferase activity in the catalytic mechanism. 2 residues coordinate Zn(2+): Cys-309 and Cys-312. One can recognise a Rhodanese domain in the interval 362 to 480; it reads EEKEPTIIDV…WKEQVDPEWP (119 aa). The active-site Cysteine persulfide intermediate; for sulfurtransferase activity is the Cys-435.

This sequence in the N-terminal section; belongs to the HesA/MoeB/ThiF family. UBA4 subfamily. The cofactor is Zn(2+).

The protein localises to the cytoplasm. Its subcellular location is the cytosol. It carries out the reaction [molybdopterin-synthase sulfur-carrier protein]-C-terminal Gly-Gly + ATP + H(+) = [molybdopterin-synthase sulfur-carrier protein]-C-terminal Gly-Gly-AMP + diphosphate. The catalysed reaction is [molybdopterin-synthase sulfur-carrier protein]-C-terminal Gly-Gly-AMP + S-sulfanyl-L-cysteinyl-[cysteine desulfurase] + AH2 = [molybdopterin-synthase sulfur-carrier protein]-C-terminal-Gly-aminoethanethioate + L-cysteinyl-[cysteine desulfurase] + A + AMP + 2 H(+). Its pathway is tRNA modification; 5-methoxycarbonylmethyl-2-thiouridine-tRNA biosynthesis. The protein operates within cofactor biosynthesis; molybdopterin biosynthesis. In terms of biological role, plays a central role in 2-thiolation of mcm(5)S(2)U at tRNA wobble positions of cytosolic tRNA(Lys), tRNA(Glu) and tRNA(Gln). Also essential during biosynthesis of the molybdenum cofactor. Acts by mediating the C-terminal thiocarboxylation of sulfur carriers urm1 and mocs2a. Its N-terminus first activates urm1 and mocs2a as acyl-adenylates (-COAMP), then the persulfide sulfur on the catalytic cysteine is transferred to urm1 and mocs2a to form thiocarboxylation (-COSH) of their C-terminus. The reaction probably involves hydrogen sulfide that is generated from the persulfide intermediate and that acts as a nucleophile towards urm1 and mocs2a. Subsequently, a transient disulfide bond is formed. Does not use thiosulfate as sulfur donor; nfs1 probably acting as a sulfur donor for thiocarboxylation reactions. This is Adenylyltransferase and sulfurtransferase uba4 from Aspergillus niger (strain ATCC MYA-4892 / CBS 513.88 / FGSC A1513).